Consider the following 580-residue polypeptide: Acyl--CoA ligase GME11374 (580 aa).

Belongs to the ATP-dependent AMP-binding enzyme family.

The protein operates within secondary metabolite biosynthesis. Functionally, acyl--CoA ligase; part of the gene cluster that mediates the biosynthesis of dibenzodioxocinones such as pestalotiollide B, a novel class of inhibitors against cholesterol ester transfer protein (CEPT). The biosynthesis initiates from condensation of acetate and malonate units catalyzed by the non-reducing PKS pks8/GME11356. Pks8/GME11356 lacks a thioesterase (TE) domain, which is important to the cyclizing of the third ring of atrochrysone carboxylic acid, and the esterase GME11355 might play the role of TE and catalyzes the cyclization reaction of the C ring. The lactamase-like protein GME11357 (or other beta-lactamases in Pestalotiopsis microspora) probably hydrolyzes the thioester bond between the ACP of pks8/GME11356 and the intermediate to release atrochrysone carboxylic acid, which is spontaneously dehydrates to form endocrocin anthrone. Endocrocin anthrone is further converted to emodin via the endocrocin intermediate. Emodin is then oxidized by several enzymes such as the Baeyer-Villiger oxidase GME11358, the oxidoreductase GME11367, the short chain dehydrogenase/reductase GME11373, as well as by other oxidoreductases from the cluster, to modify the A and C rings and open the B ring, and finally yield monodictyphenone. The prenyltransferase GME11375 may catalyze the addition reaction between the C5 side chains and the carbon bone of dibenzodioxocinones. The remaining biochemical reactions to the final product dibenzodioxocinones should be methylation catalyzed by methyltransferase GME11366 and reduction and lactonization reaction catalyzed by a series of oxidordeuctases. This Pestalotiopsis microspora protein is Acyl--CoA ligase GME11374.